The sequence spans 153 residues: ORM1-like protein 2 (153 aa).

At Met-1–Gly-21 the chain is on the cytoplasmic side. The next 2 helical transmembrane spans lie at Ile-22–Phe-42 and Phe-43–Leu-63. The Cytoplasmic portion of the chain corresponds to Leu-64–Ser-105. Residues Pro-106 to Ile-126 form a helical membrane-spanning segment. At Asn-127–Tyr-153 the chain is on the extracellular side.

The protein belongs to the ORM family. In terms of assembly, ceramide-sensitive subunit of the serine palmitoyltransferase (SPT) complex, which is also composed of SPTLC1, SPTLC2/3 and SPTSSA/B.

The protein resides in the endoplasmic reticulum membrane. Functionally, plays an essential role in the homeostatic regulation of sphingolipid de novo biosynthesis by modulating the activity of the serine palmitoyltransferase (SPT) in response to ceramide levels. When complexed to SPT, the binding of ceramides to its N-terminus stabilizes a conformation that block SPT substrate entry, hence preventing SPT catalytic activity. Through this mechanism, maintains ceramide levels at sufficient concentrations for the production of complex sphingolipids, but which prevents the accumulation of ceramides to levels that trigger apoptosis. The protein is ORM1-like protein 2 (ORMDL2) of Gallus gallus (Chicken).